The primary structure comprises 484 residues: ATP synthase subunit beta (484 aa).

An ATP-binding site is contributed by 168–175 (GGAGVGKT).

Belongs to the ATPase alpha/beta chains family. As to quaternary structure, F-type ATPases have 2 components, CF(1) - the catalytic core - and CF(0) - the membrane proton channel. CF(1) has five subunits: alpha(3), beta(3), gamma(1), delta(1), epsilon(1). CF(0) has three main subunits: a(1), b(2) and c(9-12). The alpha and beta chains form an alternating ring which encloses part of the gamma chain. CF(1) is attached to CF(0) by a central stalk formed by the gamma and epsilon chains, while a peripheral stalk is formed by the delta and b chains.

The protein localises to the cell membrane. The catalysed reaction is ATP + H2O + 4 H(+)(in) = ADP + phosphate + 5 H(+)(out). Its function is as follows. Produces ATP from ADP in the presence of a proton gradient across the membrane. The catalytic sites are hosted primarily by the beta subunits. In Arthrobacter sp. (strain FB24), this protein is ATP synthase subunit beta.